The primary structure comprises 408 residues: 3-ketoacyl-CoA thiolase B, peroxisomal (408 aa).

The active-site Acyl-thioester intermediate is Cys-112. Active-site proton acceptor residues include His-366 and Cys-394.

It belongs to the thiolase-like superfamily. Thiolase family. As to quaternary structure, homodimer.

The protein localises to the peroxisome. The enzyme catalyses an acyl-CoA + acetyl-CoA = a 3-oxoacyl-CoA + CoA. It participates in lipid metabolism; fatty acid metabolism. This is 3-ketoacyl-CoA thiolase B, peroxisomal from Candida tropicalis (Yeast).